We begin with the raw amino-acid sequence, 138 residues long: Nucleoside diphosphate kinase (138 aa).

ATP is bound by residues Lys9, Phe57, Arg85, Thr91, Arg102, and Asn112. The active-site Pros-phosphohistidine intermediate is the His120.

It belongs to the NDK family. Homotetramer. Mg(2+) is required as a cofactor.

The protein localises to the cytoplasm. The catalysed reaction is a 2'-deoxyribonucleoside 5'-diphosphate + ATP = a 2'-deoxyribonucleoside 5'-triphosphate + ADP. The enzyme catalyses a ribonucleoside 5'-diphosphate + ATP = a ribonucleoside 5'-triphosphate + ADP. In terms of biological role, major role in the synthesis of nucleoside triphosphates other than ATP. The ATP gamma phosphate is transferred to the NDP beta phosphate via a ping-pong mechanism, using a phosphorylated active-site intermediate. This Streptococcus agalactiae serotype V (strain ATCC BAA-611 / 2603 V/R) protein is Nucleoside diphosphate kinase.